Here is a 100-residue protein sequence, read N- to C-terminus: Small ribosomal subunit protein uS14c (100 aa).

Belongs to the universal ribosomal protein uS14 family. Part of the 30S ribosomal subunit.

The protein resides in the plastid. In terms of biological role, binds 16S rRNA, required for the assembly of 30S particles. The chain is Small ribosomal subunit protein uS14c from Epifagus virginiana (Beechdrops).